The sequence spans 478 residues: PRAME family member 26 (478 aa).

One copy of the LRR 1; degenerate repeat lies at 99–126 (RWKLQVLDLQDVCENFWMVWSEAMARGC). The stretch at 181 to 205 (HLCCKKLKILGMPFRNIRSILKMVN) is one LRR 2; degenerate repeat. The stretch at 206–232 (LDCIQEVEVNCKWVLPILTQFTPYLGH) is one LRR 3; degenerate repeat. Residues 233–268 (MRNLQKLVLSHMDVSRYVSPEQKKEIVTQFTTQFLK) form an LRR 4; degenerate repeat. 5 LRR repeats span residues 269–294 (LHCL…LSCL), 295–326 (KTSL…SQLK), 327–347 (TLDL…QILL), 351–378 (AATL…ALSR), and 379–403 (CFEL…LLSH).

It belongs to the PRAME family.

The sequence is that of PRAME family member 26 from Homo sapiens (Human).